We begin with the raw amino-acid sequence, 338 residues long: Phenylalanine--tRNA ligase alpha subunit (338 aa).

Glu252 contacts Mg(2+).

It belongs to the class-II aminoacyl-tRNA synthetase family. Phe-tRNA synthetase alpha subunit type 1 subfamily. As to quaternary structure, tetramer of two alpha and two beta subunits. Mg(2+) is required as a cofactor.

The protein resides in the cytoplasm. The catalysed reaction is tRNA(Phe) + L-phenylalanine + ATP = L-phenylalanyl-tRNA(Phe) + AMP + diphosphate + H(+). This Aquifex aeolicus (strain VF5) protein is Phenylalanine--tRNA ligase alpha subunit (pheS).